The primary structure comprises 436 residues: Phosphomethylpyrimidine synthase (436 aa).

Substrate is bound by residues Asn69, Met98, Tyr127, His163, 185 to 187 (SRG), 226 to 229 (DACR), and Glu265. Residue His269 coordinates Zn(2+). A substrate-binding site is contributed by Tyr292. His333 is a Zn(2+) binding site. Residues Cys409, Cys412, and Cys416 each coordinate [4Fe-4S] cluster.

It belongs to the ThiC family. [4Fe-4S] cluster is required as a cofactor.

The catalysed reaction is 5-amino-1-(5-phospho-beta-D-ribosyl)imidazole + S-adenosyl-L-methionine = 4-amino-2-methyl-5-(phosphooxymethyl)pyrimidine + CO + 5'-deoxyadenosine + formate + L-methionine + 3 H(+). Its pathway is cofactor biosynthesis; thiamine diphosphate biosynthesis. Catalyzes the synthesis of the hydroxymethylpyrimidine phosphate (HMP-P) moiety of thiamine from aminoimidazole ribotide (AIR) in a radical S-adenosyl-L-methionine (SAM)-dependent reaction. This chain is Phosphomethylpyrimidine synthase, found in Clostridium acetobutylicum (strain ATCC 824 / DSM 792 / JCM 1419 / IAM 19013 / LMG 5710 / NBRC 13948 / NRRL B-527 / VKM B-1787 / 2291 / W).